An 866-amino-acid polypeptide reads, in one-letter code: N-alpha-acetyltransferase 15, NatA auxiliary subunit (866 aa).

TPR repeat units lie at residues 46–79 (GETL…DLKS), 80–113 (HVCW…DKDN), 148–184 (RASW…SPDK), and 224–257 (LAVE…NPEN). Lys262 is modified (N6-acetyllysine). A Phosphoserine modification is found at Ser302. TPR repeat units follow at residues 374-407 (LWVQ…TPTL), 409-441 (ELFL…DTAD), and 485-522 (MWFQ…TDDQ). The interval 500 to 866 (KFGEALKKCY…AEAEELANEI (367 aa)) is interaction with HYPK. A phosphoserine mark is found at Ser537 and Ser588. Residues 579–594 (EHEADTANMSDKELKK) show a composition bias toward basic and acidic residues. A disordered region spans residues 579–642 (EHEADTANMS…EEIGGPKEEL (64 aa)). A compositionally biased stretch (basic residues) spans 595 to 604 (LRNKQRRAQK). Residues 606 to 621 (AQIEEEKKNAEKEKQQ) show a composition bias toward basic and acidic residues. One copy of the TPR 8 repeat lies at 672–705 (IETHLFAFEIYFRKEKFLLMLQSVKRAFAIDSSH). Residues Lys735 and Lys756 each carry the N6-acetyllysine modification. Ser855 and Ser856 each carry phosphoserine.

In terms of assembly, component of the N-terminal acetyltransferase A (NatA) complex composed of NAA10 or probably NAA11 and NAA15. Interacts with XRCC6, NAA50 and XRCC5. Associates with HYPK when in a complex with NAA10. Interaction with HYPK reduces the capacity to interact with NAA50. Post-translationally, cleaved by caspases during apoptosis.

The protein resides in the cytoplasm. It localises to the nucleus. Functionally, auxillary subunit of the N-terminal acetyltransferase A (NatA) complex which displays alpha (N-terminal) acetyltransferase activity. The NAT activity may be important for vascular, hematopoietic and neuronal growth and development. Required to control retinal neovascularization in adult ocular endothelial cells. In complex with XRCC6 and XRCC5 (Ku80), up-regulates transcription from the osteocalcin promoter. The polypeptide is N-alpha-acetyltransferase 15, NatA auxiliary subunit (NAA15) (Pongo abelii (Sumatran orangutan)).